The sequence spans 338 residues: Glyceraldehyde-3-phosphate dehydrogenase (338 aa).

NAD(+)-binding positions include 12–13, Asp-34, and Arg-79; that span reads RI. D-glyceraldehyde 3-phosphate is bound by residues 150 to 152, Thr-181, 210 to 211, and Arg-233; these read SCT and TG. The active-site Nucleophile is Cys-151. Asn-315 provides a ligand contact to NAD(+).

This sequence belongs to the glyceraldehyde-3-phosphate dehydrogenase family. In terms of assembly, homotetramer.

The protein resides in the cytoplasm. The catalysed reaction is D-glyceraldehyde 3-phosphate + phosphate + NAD(+) = (2R)-3-phospho-glyceroyl phosphate + NADH + H(+). Its pathway is carbohydrate degradation; glycolysis; pyruvate from D-glyceraldehyde 3-phosphate: step 1/5. In Neurospora crassa (strain ATCC 24698 / 74-OR23-1A / CBS 708.71 / DSM 1257 / FGSC 987), this protein is Glyceraldehyde-3-phosphate dehydrogenase (gpd-1).